A 76-amino-acid polypeptide reads, in one-letter code: Omega-conotoxin MoVIA (76 aa).

The N-terminal stretch at 1–22 is a signal peptide; sequence MKLTCVVIVAVLFLTACQLITA. Residues 23–45 constitute a propeptide that is removed on maturation; sequence DDSRSTQRHRALRSTTKLSMSTR. Cystine bridges form between Cys46/Cys61, Cys53/Cys64, and Cys60/Cys71. Pro49 and Pro55 each carry hydroxyproline.

Belongs to the conotoxin O1 superfamily. Expressed by the venom duct.

Its subcellular location is the secreted. Functionally, omega-conotoxins act at presynaptic membranes, they bind and block voltage-gated calcium channels (Cav). This toxin potently blocks mammalian N-type calcium channels (Cav2.2/CACNA1B) (IC(50)=330 nM on human channels). It is 9-fold more potent in displacing radiolabeled omega-conotoxin GVIA from fish brain membranes than from human SH-SY5Y cells. Omega-conotoxins act at presynaptic membranes, they bind and block voltage-gated calcium channels (Cav). This toxin potently blocks mammalian N-type calcium channels (Cav2.2/CACNA1B) (IC(50)=600 nM on human channels). It is 60-fold more potent in displacing radiolabeled omega-conotoxin GVIA from fish brain membranes than from human SH-SY5Y cells. In vivo, when tested on rat neuropathic pain model, this toxin shows an analgesic activity. This Conus moncuri (Sea snail) protein is Omega-conotoxin MoVIA.